Consider the following 632-residue polypeptide: Phosphomethylpyrimidine synthase (632 aa).

A compositionally biased stretch (polar residues) spans 1 to 13; that stretch reads MNIRSNPDTTLPA. The disordered stretch occupies residues 1–26; the sequence is MNIRSNPDTTLPAVTTGPLPSSRKIF. Residues Asn221, Met250, Tyr279, His315, 335-337, 376-379, and Glu415 each bind substrate; these read SRG and DGLR. A Zn(2+)-binding site is contributed by His419. Position 442 (Tyr442) interacts with substrate. His483 contributes to the Zn(2+) binding site. Residues Cys563, Cys566, and Cys571 each contribute to the [4Fe-4S] cluster site.

This sequence belongs to the ThiC family. Homodimer. [4Fe-4S] cluster is required as a cofactor.

The catalysed reaction is 5-amino-1-(5-phospho-beta-D-ribosyl)imidazole + S-adenosyl-L-methionine = 4-amino-2-methyl-5-(phosphooxymethyl)pyrimidine + CO + 5'-deoxyadenosine + formate + L-methionine + 3 H(+). Its pathway is cofactor biosynthesis; thiamine diphosphate biosynthesis. In terms of biological role, catalyzes the synthesis of the hydroxymethylpyrimidine phosphate (HMP-P) moiety of thiamine from aminoimidazole ribotide (AIR) in a radical S-adenosyl-L-methionine (SAM)-dependent reaction. This Afipia carboxidovorans (strain ATCC 49405 / DSM 1227 / KCTC 32145 / OM5) (Oligotropha carboxidovorans) protein is Phosphomethylpyrimidine synthase.